The chain runs to 300 residues: Putative S-adenosyl-L-methionine-dependent methyltransferase MAB_4328c (300 aa).

S-adenosyl-L-methionine contacts are provided by residues Asp-126 and 155 to 156 (DL).

It belongs to the UPF0677 family.

In terms of biological role, exhibits S-adenosyl-L-methionine-dependent methyltransferase activity. This Mycobacteroides abscessus (strain ATCC 19977 / DSM 44196 / CCUG 20993 / CIP 104536 / JCM 13569 / NCTC 13031 / TMC 1543 / L948) (Mycobacterium abscessus) protein is Putative S-adenosyl-L-methionine-dependent methyltransferase MAB_4328c.